Reading from the N-terminus, the 396-residue chain is N-acetylglucosamine-6-phosphate deacetylase (396 aa).

Residues His63, His65, and Glu136 each coordinate Fe cation. 147 to 148 contacts substrate; sequence AQ. The Fe cation site is built by His202 and His223. Substrate contacts are provided by residues 226–227, Arg234, and 255–258; these read NA and DGIH. A Fe cation-binding site is contributed by Asp281. The active-site Proton donor is Asp281. Residue 314–316 coordinates substrate; it reads LAG.

Belongs to the metallo-dependent hydrolases superfamily. NagA family. Homodimer. Requires a divalent metal cation as cofactor.

It carries out the reaction N-acetyl-D-glucosamine 6-phosphate + H2O = D-glucosamine 6-phosphate + acetate. It participates in amino-sugar metabolism; N-acetylneuraminate degradation; D-fructose 6-phosphate from N-acetylneuraminate: step 4/5. Its function is as follows. Involved in the first committed step in the biosynthesis of amino-sugar-nucleotides. Catalyzes the hydrolysis of the N-acetyl group of N-acetylglucosamine-6-phosphate (GlcNAc-6-P) to yield glucosamine 6-phosphate and acetate. Essential for growth on N-acetylglucosamine. The sequence is that of N-acetylglucosamine-6-phosphate deacetylase (nagA) from Bacillus subtilis (strain 168).